A 100-amino-acid chain; its full sequence is Large ribosomal subunit protein bL21 (100 aa).

Belongs to the bacterial ribosomal protein bL21 family. As to quaternary structure, part of the 50S ribosomal subunit. Contacts protein L20.

Its function is as follows. This protein binds to 23S rRNA in the presence of protein L20. In Mycoplasmopsis synoviae (strain 53) (Mycoplasma synoviae), this protein is Large ribosomal subunit protein bL21.